An 871-amino-acid polypeptide reads, in one-letter code: MGRLPVLLLWLAWWLSQAGIACGAGSVRLAGGLTLGGLFPVHARGAAGRACGALKKEQGVHRLEAMLYALDRVNADPELLPGVRLGARLLDTCSRDTYALEQALSFVQALIRGRGDGDEASVRCPGGVPPLRSAPPERVVAVVGASASSVSIMVANVLRLFAIPQISYASTAPELSDSTRYDFFSRVVPPDSYQAQAMVDIVRALGWNYVSTLASEGNYGESGVEAFVQISREAGGVCIAQSIKIPREPKPGEFHKVIRRLMETPNARGIIIFANEDDIRRVLEATRQANLTGHFLWVGSDSWGSKISPILNLEEEAVGAITILPKRASIDGFDQYFMTRSLENNRRNIWFAEFWEENFNCKLTSSGGQSDDSTRKCTGEERIGQDSAYEQEGKVQFVIDAVYAIAHALHSMHQALCPGHTGLCPAMEPTDGRTLLHYIRAVRFNGSAGTPVMFNENGDAPGRYDIFQYQATNGSASSGGYQAVGQWAEALRLDMEVLRWSGDPHEVPPSQCSLPCGPGERKKMVKGVPCCWHCEACDGYRFQVDEFTCEACPGDMRPTPNHTGCRPTPVVRLTWSSPWAALPLLLAVLGIMATTTIMATFMRHNDTPIVRASGRELSYVLLTGIFLIYAITFLMVAEPCAAICAARRLLLGLGTTLSYSALLTKTNRIYRIFEQGKRSVTPPPFISPTSQLVITFGLTSLQVVGVIAWLGAQPPHSVIDYEEQRTVDPEQARGVLKCDMSDLSLIGCLGYSLLLMVTCTVYAIKARGVPETFNEAKPIGFTMYTTCIIWLAFVPIFFGTAQSAEKIYIQTTTLTVSLSLSASVSLGMLYVPKTYVILFHPEQNVQKRKRSLKKTSTMAAPPQNENAEDAK.

The N-terminal stretch at 1–23 (MGRLPVLLLWLAWWLSQAGIACG) is a signal peptide. Topologically, residues 24–579 (AGSVRLAGGL…VVRLTWSSPW (556 aa)) are extracellular. A disulfide bridge links Cys51 with Cys93. L-glutamate-binding positions include Ser148, 169–171 (AST), and Tyr219. Disulfide bonds link Cys238/Cys530, Cys361/Cys377, Cys417/Cys424, Cys512/Cys531, Cys516/Cys534, Cys537/Cys549, and Cys552/Cys565. Residue Asn290 is glycosylated (N-linked (GlcNAc...) asparagine). Position 301 (Asp301) interacts with L-glutamate. Residue Lys394 coordinates L-glutamate. N-linked (GlcNAc...) asparagine glycans are attached at residues Asn445 and Asn473. N-linked (GlcNAc...) asparagine glycosylation is present at Asn561. A helical transmembrane segment spans residues 580 to 602 (AALPLLLAVLGIMATTTIMATFM). Residues 603–616 (RHNDTPIVRASGRE) are Cytoplasmic-facing. A helical membrane pass occupies residues 617-637 (LSYVLLTGIFLIYAITFLMVA). At 638 to 648 (EPCAAICAARR) the chain is on the extracellular side. Residues 649–667 (LLLGLGTTLSYSALLTKTN) form a helical membrane-spanning segment. Residues 668–691 (RIYRIFEQGKRSVTPPPFISPTSQ) are Cytoplasmic-facing. The chain crosses the membrane as a helical span at residues 692-712 (LVITFGLTSLQVVGVIAWLGA). Topologically, residues 713-742 (QPPHSVIDYEEQRTVDPEQARGVLKCDMSD) are extracellular. The helical transmembrane segment at 743 to 764 (LSLIGCLGYSLLLMVTCTVYAI) threads the bilayer. Topologically, residues 765-777 (KARGVPETFNEAK) are cytoplasmic. Residues 778-800 (PIGFTMYTTCIIWLAFVPIFFGT) form a helical membrane-spanning segment. The Extracellular segment spans residues 801-813 (AQSAEKIYIQTTT). The helical transmembrane segment at 814-839 (LTVSLSLSASVSLGMLYVPKTYVILF) threads the bilayer. At 840–871 (HPEQNVQKRKRSLKKTSTMAAPPQNENAEDAK) the chain is on the cytoplasmic side. The interval 850–871 (RSLKKTSTMAAPPQNENAEDAK) is disordered.

The protein belongs to the G-protein coupled receptor 3 family. As to quaternary structure, homodimer. Interacts with GPR179. Interacts with photoreceptor synaptic protein LRIT1 (via its N-terminal extracellular domain). In terms of tissue distribution, restricted expression in the inner nuclear layer of the retina.

Its subcellular location is the cell membrane. The protein localises to the endoplasmic reticulum membrane. The protein resides in the golgi apparatus membrane. It localises to the cell projection. It is found in the dendrite. Its function is as follows. G-protein coupled receptor for glutamate. Ligand binding causes a conformation change that triggers signaling via guanine nucleotide-binding proteins (G proteins) and modulates the activity of down-stream effectors, such as adenylate cyclase. Signaling inhibits adenylate cyclase activity. Signaling stimulates TRPM1 channel activity and Ca(2+) uptake. Required for normal vision. The protein is Metabotropic glutamate receptor 6 (Grm6) of Rattus norvegicus (Rat).